A 287-amino-acid polypeptide reads, in one-letter code: ATP synthase gamma chain (287 aa).

The protein belongs to the ATPase gamma chain family. As to quaternary structure, F-type ATPases have 2 components, CF(1) - the catalytic core - and CF(0) - the membrane proton channel. CF(1) has five subunits: alpha(3), beta(3), gamma(1), delta(1), epsilon(1). CF(0) has three main subunits: a, b and c.

The protein localises to the cell membrane. In terms of biological role, produces ATP from ADP in the presence of a proton gradient across the membrane. The gamma chain is believed to be important in regulating ATPase activity and the flow of protons through the CF(0) complex. In Halothermothrix orenii (strain H 168 / OCM 544 / DSM 9562), this protein is ATP synthase gamma chain.